The following is a 394-amino-acid chain: Probable pectate lyase 16 (394 aa).

Positions 1–22 (MTLFTVSCLLVVLFLCHSLVHA) are cleaved as a signal peptide. 3 residues coordinate Ca(2+): Asp192, Asp216, and Asp220. Residue Arg272 is part of the active site.

The protein belongs to the polysaccharide lyase 1 family. Requires Ca(2+) as cofactor.

The catalysed reaction is Eliminative cleavage of (1-&gt;4)-alpha-D-galacturonan to give oligosaccharides with 4-deoxy-alpha-D-galact-4-enuronosyl groups at their non-reducing ends.. It participates in glycan metabolism; pectin degradation; 2-dehydro-3-deoxy-D-gluconate from pectin: step 2/5. This Arabidopsis thaliana (Mouse-ear cress) protein is Probable pectate lyase 16.